The sequence spans 501 residues: Actin nucleation-promoting factor WASL (501 aa).

Serine 2 carries the post-translational modification N-acetylserine. A WH1 domain is found at 31-138; it reads LGKKCVTMSS…KAVTDLLGRR (108 aa). The segment at 135–158 is disordered; the sequence is LGRRQRKSEKRRDAPNGPNLPMAT. The 14-residue stretch at 200 to 213 folds into the CRIB domain; it reads IGTPSNFQHIGHVG. At serine 239 the chain carries Phosphoserine; by TNK2. Tyrosine 253 is subject to Phosphotyrosine; by FAK1 and TNK2. Disordered stretches follow at residues 263 to 403 and 442 to 501; these read EAVK…GNKA and QLKS…EWED. Positions 273–387 are enriched in pro residues; the sequence is APPPPPPSRG…PPGPPPPPGL (115 aa). Arginine 304 carries the omega-N-methylarginine modification. WH2 domains follow at residues 401 to 418 and 429 to 446; these read NKAALLDQIREGAQLKKV and GRDALLDQIRQGIQLKSV. The span at 442–453 shows a compositional bias: polar residues; that stretch reads QLKSVSDGQEST. A phosphoserine mark is found at serine 480 and serine 481. Residues 482–501 show a composition bias toward acidic residues; it reads DEDEDDDDEEDFEDDDEWED.

In terms of assembly, binds actin and the Arp2/3 complex. Interacts with CDC42. Interacts with FCHSD1. Interacts with FCHSD2. Binds to SH3 domains of GRB2. Interacts with the C-terminal SH3 domain of DNMBP. Interacts with SNX9. Interacts with the WW domains of PRPF40A/FBP11. Interacts with PTK2/FAK1. Interacts with PACSIN1, PACSIN2 and PACSIN3. Interacts with NOSTRIN. Binds to TNK2. Interacts with SNX33. Interacts with NONO (via second RRM domain); the interaction is direct. Component of a multiprotein complex with NONO and SFPQ; associates with the complex via direct interaction with NONO. In terms of processing, phosphorylation at Ser-239, Tyr-253, Ser-480 and Ser-481 enhances actin polymerization activity.

It is found in the cytoplasm. The protein resides in the cytoskeleton. The protein localises to the nucleus. Its function is as follows. Regulates actin polymerization by stimulating the actin-nucleating activity of the Arp2/3 complex. Involved in various processes, such as mitosis and cytokinesis, via its role in the regulation of actin polymerization. Together with CDC42, involved in the extension and maintenance of the formation of thin, actin-rich surface projections called filopodia. In addition to its role in the cytoplasm, also plays a role in the nucleus by regulating gene transcription, probably by promoting nuclear actin polymerization. Binds to HSF1/HSTF1 and forms a complex on heat shock promoter elements (HSE) that negatively regulates HSP90 expression. Plays a role in dendrite spine morphogenesis. In Mus musculus (Mouse), this protein is Actin nucleation-promoting factor WASL (Wasl).